Reading from the N-terminus, the 312-residue chain is tRNA dimethylallyltransferase (312 aa).

Position 12-19 (12-19 (GPTAIGKS)) interacts with ATP. Position 14–19 (14–19 (TAIGKS)) interacts with substrate. 2 interaction with substrate tRNA regions span residues 38–41 (DSKL) and 162–166 (QRVLR).

The protein belongs to the IPP transferase family. Monomer. Requires Mg(2+) as cofactor.

The enzyme catalyses adenosine(37) in tRNA + dimethylallyl diphosphate = N(6)-dimethylallyladenosine(37) in tRNA + diphosphate. Its function is as follows. Catalyzes the transfer of a dimethylallyl group onto the adenine at position 37 in tRNAs that read codons beginning with uridine, leading to the formation of N6-(dimethylallyl)adenosine (i(6)A). The polypeptide is tRNA dimethylallyltransferase (Buchnera aphidicola subsp. Cinara cedri (strain Cc)).